The chain runs to 242 residues: MAKVSMRDMLQAGVHFGHQTRYWNPKMKSYIFGARSKVHIINLEKTVPMFDDAMNFISSVAAKKGKVLFVGTKRAASEAVKEAAERCDQFYVNHRWLGGMLTNWKTVRQSIKRLKDLETQSQDGTFDKLTKKEALMRTREMEKLEKSLGGIKNMGGLPDVLFVVDADHEHIAIKEANNLGIPVVSIVDTNSNPDGVDYVIPGNDDAIRAVQLYLNAAADTVLEARAQDIVVQAEQDGFVEAE.

It belongs to the universal ribosomal protein uS2 family.

This chain is Small ribosomal subunit protein uS2, found in Aeromonas hydrophila subsp. hydrophila (strain ATCC 7966 / DSM 30187 / BCRC 13018 / CCUG 14551 / JCM 1027 / KCTC 2358 / NCIMB 9240 / NCTC 8049).